A 160-amino-acid chain; its full sequence is uncharacterized protein (160 aa).

Positions 1-31 (METEKPNTDVKVAQDLEKLKLDEKHKDEKKD) are enriched in basic and acidic residues. The disordered stretch occupies residues 1-160 (METEKPNTDV…DKKDKEHKKE (160 aa)). Positions 20–111 (KLDEKHKDEK…KSKLEGKKDK (92 aa)) form a coiled coil. The segment covering 32–42 (KKDKKDKKDKK) has biased composition (basic residues). Residues 43 to 160 (DKKEKTPEEI…DKKDKEHKKE (118 aa)) are compositionally biased toward basic and acidic residues.

This is an uncharacterized protein from Dictyostelium discoideum (Social amoeba).